The chain runs to 491 residues: UDP-N-acetylmuramate--L-alanine ligase (491 aa).

Residue 126–132 (GTHGKTT) coordinates ATP.

Belongs to the MurCDEF family.

Its subcellular location is the cytoplasm. It catalyses the reaction UDP-N-acetyl-alpha-D-muramate + L-alanine + ATP = UDP-N-acetyl-alpha-D-muramoyl-L-alanine + ADP + phosphate + H(+). Its pathway is cell wall biogenesis; peptidoglycan biosynthesis. Functionally, cell wall formation. The chain is UDP-N-acetylmuramate--L-alanine ligase from Klebsiella pneumoniae subsp. pneumoniae (strain ATCC 700721 / MGH 78578).